A 422-amino-acid polypeptide reads, in one-letter code: Enolase (422 aa).

Gln-162 contacts (2R)-2-phosphoglycerate. Glu-204 acts as the Proton donor in catalysis. The Mg(2+) site is built by Asp-241, Glu-284, and Asp-311. Positions 336, 365, 366, and 387 each coordinate (2R)-2-phosphoglycerate. The active-site Proton acceptor is the Lys-336.

It belongs to the enolase family. As to quaternary structure, component of the RNA degradosome, a multiprotein complex involved in RNA processing and mRNA degradation. Mg(2+) is required as a cofactor.

The protein localises to the cytoplasm. It is found in the secreted. It localises to the cell surface. The enzyme catalyses (2R)-2-phosphoglycerate = phosphoenolpyruvate + H2O. The protein operates within carbohydrate degradation; glycolysis; pyruvate from D-glyceraldehyde 3-phosphate: step 4/5. Catalyzes the reversible conversion of 2-phosphoglycerate (2-PG) into phosphoenolpyruvate (PEP). It is essential for the degradation of carbohydrates via glycolysis. In Legionella pneumophila (strain Paris), this protein is Enolase.